Reading from the N-terminus, the 278-residue chain is Pantothenate synthetase (278 aa).

31-38 (MGALHEGH) contributes to the ATP binding site. H38 serves as the catalytic Proton donor. Q62 serves as a coordination point for (R)-pantoate. Q62 contacts beta-alanine. 148-151 (GEKD) provides a ligand contact to ATP. Q154 serves as a coordination point for (R)-pantoate. Residues L177 and 185–188 (MSSR) contribute to the ATP site.

The protein belongs to the pantothenate synthetase family. As to quaternary structure, homodimer.

The protein resides in the cytoplasm. It catalyses the reaction (R)-pantoate + beta-alanine + ATP = (R)-pantothenate + AMP + diphosphate + H(+). Its pathway is cofactor biosynthesis; (R)-pantothenate biosynthesis; (R)-pantothenate from (R)-pantoate and beta-alanine: step 1/1. Its function is as follows. Catalyzes the condensation of pantoate with beta-alanine in an ATP-dependent reaction via a pantoyl-adenylate intermediate. In Acidiphilium cryptum (strain JF-5), this protein is Pantothenate synthetase.